A 247-amino-acid polypeptide reads, in one-letter code: Small ribosomal subunit protein uS2 (247 aa).

Belongs to the universal ribosomal protein uS2 family.

This chain is Small ribosomal subunit protein uS2, found in Pseudomonas syringae pv. tomato (strain ATCC BAA-871 / DC3000).